Consider the following 393-residue polypeptide: NAD(P)H-quinone oxidoreductase subunit H, chloroplastic (393 aa).

Belongs to the complex I 49 kDa subunit family. As to quaternary structure, NDH is composed of at least 16 different subunits, 5 of which are encoded in the nucleus.

Its subcellular location is the plastid. It localises to the chloroplast thylakoid membrane. The enzyme catalyses a plastoquinone + NADH + (n+1) H(+)(in) = a plastoquinol + NAD(+) + n H(+)(out). It catalyses the reaction a plastoquinone + NADPH + (n+1) H(+)(in) = a plastoquinol + NADP(+) + n H(+)(out). Functionally, NDH shuttles electrons from NAD(P)H:plastoquinone, via FMN and iron-sulfur (Fe-S) centers, to quinones in the photosynthetic chain and possibly in a chloroplast respiratory chain. The immediate electron acceptor for the enzyme in this species is believed to be plastoquinone. Couples the redox reaction to proton translocation, and thus conserves the redox energy in a proton gradient. In Chlorokybus atmophyticus (Soil alga), this protein is NAD(P)H-quinone oxidoreductase subunit H, chloroplastic.